The sequence spans 625 residues: Zinc finger protein 652-A (625 aa).

Residues F80–K255 are disordered. Residues R82 to S100 are compositionally biased toward basic and acidic residues. Positions G101–E127 are enriched in acidic residues. Over residues K150–S166 the composition is skewed to basic and acidic residues. Residues D167 to N186 are compositionally biased toward acidic residues. The segment covering P240–K255 has biased composition (basic and acidic residues). The segment at L258–H281 adopts a C2H2-type 1 zinc-finger fold. The C2H2-type 2; degenerate zinc-finger motif lies at Q285 to D307. 6 consecutive C2H2-type zinc fingers follow at residues I312–H335, F342–H364, F370–H392, F398–H420, F426–H448, and F454–H476. The segment at Y482–F505 adopts a C2H2-type 9; degenerate zinc-finger fold.

The protein belongs to the krueppel C2H2-type zinc-finger protein family.

The protein resides in the nucleus. Its function is as follows. May be involved in transcriptional regulation. This chain is Zinc finger protein 652-A (znf652-a), found in Xenopus laevis (African clawed frog).